The chain runs to 230 residues: Ribose-5-phosphate isomerase A (230 aa).

Substrate-binding positions include threonine 32 to threonine 35, aspartate 85 to aspartate 88, and lysine 98 to glycine 101. Glutamate 107 acts as the Proton acceptor in catalysis. Lysine 125 contacts substrate.

The protein belongs to the ribose 5-phosphate isomerase family. As to quaternary structure, homodimer.

It catalyses the reaction aldehydo-D-ribose 5-phosphate = D-ribulose 5-phosphate. It participates in carbohydrate degradation; pentose phosphate pathway; D-ribose 5-phosphate from D-ribulose 5-phosphate (non-oxidative stage): step 1/1. Functionally, catalyzes the reversible conversion of ribose-5-phosphate to ribulose 5-phosphate. The chain is Ribose-5-phosphate isomerase A from Burkholderia ambifaria (strain ATCC BAA-244 / DSM 16087 / CCUG 44356 / LMG 19182 / AMMD) (Burkholderia cepacia (strain AMMD)).